Here is a 953-residue protein sequence, read N- to C-terminus: Translation initiation factor IF-2 (953 aa).

2 disordered regions span residues 52 to 247 and 279 to 363; these read KASK…LAEL and TKLK…TERK. 3 stretches are compositionally biased toward basic and acidic residues: residues 80–89, 98–111, and 140–188; these read TGSEHVEKTQ, FKAE…EQAA, and QGDK…ENHK. A compositionally biased stretch (polar residues) spans 191–207; that stretch reads RFTNQKKQGRQEPQSKS. The span at 229–247 shows a compositional bias: basic and acidic residues; the sequence is RQSETRFRAQQEAKRLAEL. Residues 282–291 show a composition bias toward polar residues; it reads KSSNISAKST. Basic and acidic residues predominate over residues 300 to 317; it reads ARPEKNRELTHHSQEGQK. The segment covering 322 to 338 has biased composition (low complexity); the sequence is SWNSQNQVRNQKNSNWN. Residues 339–348 are compositionally biased toward basic residues; sequence KNKKTKKGKN. Residues 454–623 form the tr-type G domain; sequence ERAPVVTIMG…LLVAEVEELK (170 aa). A G1 region spans residues 463–470; sequence GHVDHGKT. 463–470 serves as a coordination point for GTP; it reads GHVDHGKT. A G2 region spans residues 488–492; that stretch reads GITQH. Positions 509–512 are G3; it reads DTPG. GTP is bound by residues 509 to 513 and 563 to 566; these read DTPGH and NKID. The segment at 563–566 is G4; that stretch reads NKID. The G5 stretch occupies residues 599-601; it reads SAK.

It belongs to the TRAFAC class translation factor GTPase superfamily. Classic translation factor GTPase family. IF-2 subfamily.

The protein resides in the cytoplasm. One of the essential components for the initiation of protein synthesis. Protects formylmethionyl-tRNA from spontaneous hydrolysis and promotes its binding to the 30S ribosomal subunits. Also involved in the hydrolysis of GTP during the formation of the 70S ribosomal complex. In Streptococcus pyogenes serotype M5 (strain Manfredo), this protein is Translation initiation factor IF-2.